The chain runs to 167 residues: Protein MIX23 (167 aa).

The segment at 81 to 108 is disordered; sequence QLDQDRNTSKSPLKSQQQLPSSSTTQVS. Over residues 89–106 the composition is skewed to low complexity; that stretch reads SKSPLKSQQQLPSSSTTQ.

The protein belongs to the MIX23 family.

The polypeptide is Protein MIX23 (cid2) (Schizosaccharomyces pombe (strain 972 / ATCC 24843) (Fission yeast)).